Here is an 854-residue protein sequence, read N- to C-terminus: Glucans biosynthesis glucosyltransferase H (854 aa).

The next 7 helical transmembrane spans lie at 155-175, 209-229, 528-548, 583-603, 619-639, 671-691, and 695-715; these read ILLV…KTIL, ILVL…TALM, VFLT…FLML, IALF…SVIL, FISL…RMLF, FVRH…MAWL, and FLWW…VSVY.

It belongs to the glycosyltransferase 2 family. OpgH subfamily.

It localises to the cell inner membrane. Its pathway is glycan metabolism; osmoregulated periplasmic glucan (OPG) biosynthesis. Involved in the biosynthesis of osmoregulated periplasmic glucans (OPGs). This chain is Glucans biosynthesis glucosyltransferase H, found in Pectobacterium carotovorum subsp. carotovorum (strain PC1).